We begin with the raw amino-acid sequence, 313 residues long: Ornithine carbamoyltransferase (313 aa).

Residues 57–60, arginine 108, and 135–138 contribute to the carbamoyl phosphate site; these read STRT and HPTQ. Residues asparagine 167, aspartate 231, and 235–236 contribute to the L-ornithine site; that span reads SM. Carbamoyl phosphate contacts are provided by residues 272–273 and arginine 300; that span reads CL.

It belongs to the aspartate/ornithine carbamoyltransferase superfamily. OTCase family.

The protein resides in the cytoplasm. It catalyses the reaction carbamoyl phosphate + L-ornithine = L-citrulline + phosphate + H(+). It functions in the pathway amino-acid biosynthesis; L-arginine biosynthesis; L-arginine from L-ornithine and carbamoyl phosphate: step 1/3. In terms of biological role, reversibly catalyzes the transfer of the carbamoyl group from carbamoyl phosphate (CP) to the N(epsilon) atom of ornithine (ORN) to produce L-citrulline. In Thermotoga maritima (strain ATCC 43589 / DSM 3109 / JCM 10099 / NBRC 100826 / MSB8), this protein is Ornithine carbamoyltransferase.